The sequence spans 392 residues: Cell division protein DivIB (392 aa).

Positions Met1 to Glu87 are disordered. Topologically, residues Met1–Met131 are cytoplasmic. A compositionally biased stretch (basic and acidic residues) spans Lys14–Ala32. Over residues Thr58–Asn76 the composition is skewed to acidic residues. The helical transmembrane segment at Trp132–Leu152 threads the bilayer. The 72-residue stretch at Ser153 to His224 folds into the POTRA domain. The Extracellular segment spans residues Ser153–Asn392. Residues Ile368–Asn392 form a disordered region.

Belongs to the FtsQ/DivIB family. DivIB subfamily.

The protein localises to the cell membrane. Functionally, cell division protein that may be involved in stabilizing or promoting the assembly of the division complex. This Lactococcus lactis subsp. lactis (strain IL1403) (Streptococcus lactis) protein is Cell division protein DivIB.